The primary structure comprises 332 residues: MAEYEVIVIGGGPVGLFGTFYSGLRDMKVLLIDSQDELGGQLVTLYPEKMVYDVGGFAGIQAYDLAQRLIEQAKMFGPDIRTREWADTLEKTQDGMWVVKTDKGGEYKTKTVMIAAGIGKITPSRLGAKGEVEYENKGVYYTVRRKSEFQGKRVLIVGGGDSAVDWALTLAPIAKEVTLIHRRDQFRAHERSVKEMFEVAKVYTWHELKEVKGDGNRVTQAIIFDNRTKEEKTLNVDAVIISIGHKGDLGNMLKWGLNMKGRDIVVNGKMETNLPGVYAVGDIASVEGMPKLALIAVGFGQAAIASSVAKKYVDPNASVFAGHSSEMDKFKK.

Residues D33, Q41, Y46, A86, I121, D282, and S325 each contribute to the FAD site.

This sequence belongs to the ferredoxin--NADP reductase type 2 family. In terms of assembly, homodimer. The cofactor is FAD.

The enzyme catalyses 2 reduced [2Fe-2S]-[ferredoxin] + NADP(+) + H(+) = 2 oxidized [2Fe-2S]-[ferredoxin] + NADPH. This chain is Ferredoxin--NADP reductase, found in Metallosphaera sedula (strain ATCC 51363 / DSM 5348 / JCM 9185 / NBRC 15509 / TH2).